The following is a 366-amino-acid chain: Histidinol-phosphate aminotransferase (366 aa).

Lys-228 is subject to N6-(pyridoxal phosphate)lysine.

This sequence belongs to the class-II pyridoxal-phosphate-dependent aminotransferase family. Histidinol-phosphate aminotransferase subfamily. In terms of assembly, homodimer. It depends on pyridoxal 5'-phosphate as a cofactor.

It catalyses the reaction L-histidinol phosphate + 2-oxoglutarate = 3-(imidazol-4-yl)-2-oxopropyl phosphate + L-glutamate. Its pathway is amino-acid biosynthesis; L-histidine biosynthesis; L-histidine from 5-phospho-alpha-D-ribose 1-diphosphate: step 7/9. This Campylobacter fetus subsp. fetus (strain 82-40) protein is Histidinol-phosphate aminotransferase.